A 195-amino-acid chain; its full sequence is Anthranilate synthase component 2 (195 aa).

The Glutamine amidotransferase type-1 domain occupies 3-195; that stretch reads LTLIIDNYDS…KILYNFLNRV (193 aa). An L-glutamine-binding site is contributed by 54–56; sequence GPG. The active-site Nucleophile; for GATase activity is the C84. Residues Q88 and 137–138 each bind L-glutamine; that span reads SL. Residues H175 and E177 each act as for GATase activity in the active site.

As to quaternary structure, heterotetramer consisting of two non-identical subunits: a beta subunit (TrpG) and a large alpha subunit (TrpE).

It carries out the reaction chorismate + L-glutamine = anthranilate + pyruvate + L-glutamate + H(+). It participates in amino-acid biosynthesis; L-tryptophan biosynthesis; L-tryptophan from chorismate: step 1/5. Its function is as follows. Part of a heterotetrameric complex that catalyzes the two-step biosynthesis of anthranilate, an intermediate in the biosynthesis of L-tryptophan. In the first step, the glutamine-binding beta subunit (TrpG) of anthranilate synthase (AS) provides the glutamine amidotransferase activity which generates ammonia as a substrate that, along with chorismate, is used in the second step, catalyzed by the large alpha subunit of AS (TrpE) to produce anthranilate. In the absence of TrpG, TrpE can synthesize anthranilate directly from chorismate and high concentrations of ammonia. This is Anthranilate synthase component 2 (trpG) from Saccharolobus solfataricus (strain ATCC 35092 / DSM 1617 / JCM 11322 / P2) (Sulfolobus solfataricus).